A 335-amino-acid chain; its full sequence is Histidinol-phosphatase (335 aa).

Belongs to the PHP hydrolase family. HisK subfamily.

It carries out the reaction L-histidinol phosphate + H2O = L-histidinol + phosphate. Its pathway is amino-acid biosynthesis; L-histidine biosynthesis; L-histidine from 5-phospho-alpha-D-ribose 1-diphosphate: step 8/9. The polypeptide is Histidinol-phosphatase (HIS2) (Saccharomyces cerevisiae (strain ATCC 204508 / S288c) (Baker's yeast)).